The chain runs to 962 residues: Glycine dehydrogenase (decarboxylating) (962 aa).

Lys-709 carries the post-translational modification N6-(pyridoxal phosphate)lysine.

The protein belongs to the GcvP family. As to quaternary structure, the glycine cleavage system is composed of four proteins: P, T, L and H. The cofactor is pyridoxal 5'-phosphate.

The enzyme catalyses N(6)-[(R)-lipoyl]-L-lysyl-[glycine-cleavage complex H protein] + glycine + H(+) = N(6)-[(R)-S(8)-aminomethyldihydrolipoyl]-L-lysyl-[glycine-cleavage complex H protein] + CO2. Its function is as follows. The glycine cleavage system catalyzes the degradation of glycine. The P protein binds the alpha-amino group of glycine through its pyridoxal phosphate cofactor; CO(2) is released and the remaining methylamine moiety is then transferred to the lipoamide cofactor of the H protein. The protein is Glycine dehydrogenase (decarboxylating) of Shewanella sp. (strain MR-4).